The primary structure comprises 25 residues: GLVSSIGRALGGLLADVVKSKEQPA.

This sequence belongs to the frog skin active peptide (FSAP) family. Caerin subfamily. Expressed by the skin parotoid and/or rostral glands.

The protein localises to the secreted. Functionally, antimicrobial peptide, that adopts an alpha helical conformation which can disrupt bacterial membranes. Each caerin displays a different antimicrobial specificity. The chain is Caerin-2.2 from Ranoidea caerulea (Green tree frog).